The following is a 532-amino-acid chain: Fatty-acid amide hydrolase 2 (532 aa).

Residues 11–31 (LFLLRALGFLIGLVGRAALVL) traverse the membrane as a helical segment. Residues K131 and S206 each act as charge relay system in the active site. The active-site Acyl-ester intermediate is the S230.

Belongs to the amidase family. Homodimer. Expressed in kidney, liver, lung, prostate, heart and ovary.

It localises to the membrane. It is found in the lipid droplet. It carries out the reaction N-(5Z,8Z,11Z,14Z-eicosatetraenoyl)-ethanolamine + H2O = ethanolamine + (5Z,8Z,11Z,14Z)-eicosatetraenoate. The enzyme catalyses (9Z)-octadecenamide + H2O = (9Z)-octadecenoate + NH4(+). It catalyses the reaction N-(9Z-octadecenoyl) ethanolamine + H2O = ethanolamine + (9Z)-octadecenoate. The catalysed reaction is N-hexadecanoylethanolamine + H2O = ethanolamine + hexadecanoate. Inhibited by O-aryl carbamates and alpha-keto heterocytes. Catalyzes the hydrolysis of endogenous amidated lipids like the sleep-inducing lipid oleamide ((9Z)-octadecenamide), the endocannabinoid anandamide (N-(5Z,8Z,11Z,14Z-eicosatetraenoyl)-ethanolamine), as well as other fatty amides, to their corresponding fatty acids, thereby regulating the signaling functions of these molecules. Hydrolyzes monounsaturated substrate anandamide preferentially as compared to polyunsaturated substrates. The polypeptide is Fatty-acid amide hydrolase 2 (FAAH2) (Homo sapiens (Human)).